Consider the following 145-residue polypeptide: Cytochrome c2 (145 aa).

Residues 1–21 (MKFQVKALAAIAAFAALPALA) form the signal peptide. Glutamine 22 is subject to Pyrrolidone carboxylic acid. 4 residues coordinate heme c: cysteine 36, cysteine 39, histidine 40, and methionine 121.

It belongs to the cytochrome c family. Post-translationally, binds 1 heme c group covalently per subunit.

The protein resides in the periplasm. Functionally, cytochrome c2 is found mainly in purple, non-sulfur, photosynthetic bacteria where it functions as the electron donor to the oxidized bacteriochlorophyll in the photophosphorylation pathway. However, it may also have a role in the respiratory chain and is found in some non-photosynthetic bacteria. In Cereibacter sphaeroides (strain ATCC 17023 / DSM 158 / JCM 6121 / CCUG 31486 / LMG 2827 / NBRC 12203 / NCIMB 8253 / ATH 2.4.1.) (Rhodobacter sphaeroides), this protein is Cytochrome c2 (cycA).